A 201-amino-acid chain; its full sequence is ATP-dependent Clp protease proteolytic subunit (201 aa).

Residue serine 97 is the Nucleophile of the active site. The active site involves histidine 122.

It belongs to the peptidase S14 family. Fourteen ClpP subunits assemble into 2 heptameric rings which stack back to back to give a disk-like structure with a central cavity, resembling the structure of eukaryotic proteasomes.

Its subcellular location is the cytoplasm. The catalysed reaction is Hydrolysis of proteins to small peptides in the presence of ATP and magnesium. alpha-casein is the usual test substrate. In the absence of ATP, only oligopeptides shorter than five residues are hydrolyzed (such as succinyl-Leu-Tyr-|-NHMec, and Leu-Tyr-Leu-|-Tyr-Trp, in which cleavage of the -Tyr-|-Leu- and -Tyr-|-Trp bonds also occurs).. Functionally, cleaves peptides in various proteins in a process that requires ATP hydrolysis. Has a chymotrypsin-like activity. Plays a major role in the degradation of misfolded proteins. The chain is ATP-dependent Clp protease proteolytic subunit from Nitratidesulfovibrio vulgaris (strain DSM 19637 / Miyazaki F) (Desulfovibrio vulgaris).